Reading from the N-terminus, the 230-residue chain is Large ribosomal subunit protein uL1 (230 aa).

This sequence belongs to the universal ribosomal protein uL1 family. Part of the 50S ribosomal subunit.

Functionally, binds directly to 23S rRNA. The L1 stalk is quite mobile in the ribosome, and is involved in E site tRNA release. Protein L1 is also a translational repressor protein, it controls the translation of the L11 operon by binding to its mRNA. The protein is Large ribosomal subunit protein uL1 of Leuconostoc mesenteroides subsp. mesenteroides (strain ATCC 8293 / DSM 20343 / BCRC 11652 / CCM 1803 / JCM 6124 / NCDO 523 / NBRC 100496 / NCIMB 8023 / NCTC 12954 / NRRL B-1118 / 37Y).